A 287-amino-acid chain; its full sequence is Beta-lactamase GES-5 (287 aa).

An N-terminal signal peptide occupies residues 1–18; the sequence is MRFIHALLLAGIAHSAYA. A disulfide bridge links cysteine 63 with cysteine 233. The active-site Nucleophile; acyl-ester intermediate is the serine 64. Residues serine 64, serine 125, asparagine 127, threonine 230, threonine 232, and arginine 238 each coordinate imipenem.

Belongs to the class-A beta-lactamase family.

Its subcellular location is the secreted. It carries out the reaction a beta-lactam + H2O = a substituted beta-amino acid. Inhibited by the beta-lactamase-blocking agents clavulanic acid, sulbactam and tazobactam, via a covalent binding to Ser-64. In terms of biological role, confers resistance to penicillins, cephalosporins and carbapenems. Has carbapenem-hydrolyzing activity. The protein is Beta-lactamase GES-5 of Klebsiella pneumoniae.